The following is a 662-amino-acid chain: MAQVQAPSSHSPPPPAVVNDGAATASATPGIGVGGGGDGVTHGALCSLYVGDLDFNVTDSQLYDYFTEVCQVVSVRVCRDAATNTSLGYGYVNYSNTDDAEKAMQKLNYSYLNGKMIRITYSSRDSSARRSGVGNLFVKNLDKSVDNKTLHEAFSGCGTIVSCKVATDHMGQSRGYGFVQFDTEDSAKNAIEKLNGKVLNDKQIFVGPFLRKEERESAADKMKFTNVYVKNLSEATTDDELKTTFGQYGSISSAVVMRDGDGKSRCFGFVNFENPEDAARAVEALNGKKFDDKEWYVGKAQKKSERELELSRRYEQGSSDGGNKFDGLNLYVKNLDDTVTDEKLRELFAEFGTITSCKVMRDPSGTSKGSGFVAFSAASEASRVLNEMNGKMVGGKPLYVALAQRKEERRAKLQAQFSQMRPAFIPGVGPRMPIFTGGAPGLGQQIFYGQGPPPIIPHQPGFGYQPQLVPGMRPAFFGGPMMQPGQQGPRPGGRRSGDGPMRHQHQQPMPYMQPQMMPRGRGYRYPSGGRNMPDGPMPGGMVPVAYDMNVMPYSQPMSAGQLATSLANATPAQQRTLLGESLYPLVDQIESEHAAKVTGMLLEMDQTEVLHLLESPEALNAKVSEALDVLRNVNQPSSQGSEGNKSGSPSDLLASLSINDHL.

A disordered region spans residues 1-23 (MAQVQAPSSHSPPPPAVVNDGAA). RRM domains are found at residues 46 to 124 (CSLY…YSSR), 134 to 211 (GNLF…PFLR), 225 to 302 (TNVY…KAQK), and 328 to 405 (LNLY…LAQR). Composition is skewed to low complexity over residues 480-489 (PMMQPGQQGP) and 506-518 (QQPM…QMMP). 2 disordered regions span residues 480–518 (PMMQ…QMMP) and 634–662 (NQPS…NDHL). Residues 558–635 (SAGQLATSLA…ALDVLRNVNQ (78 aa)) enclose the PABC domain. The span at 634 to 649 (NQPSSQGSEGNKSGSP) shows a compositional bias: polar residues.

It belongs to the polyadenylate-binding protein type-1 family. In terms of assembly, interacts with ERD15/CID1. Interacts with Turnip mosaic virus (TuMV) VPg-Pro.

The protein localises to the cytoplasm. It localises to the nucleus. Its function is as follows. Binds the poly(A) tail of mRNA. Appears to be an important mediator of the multiple roles of the poly(A) tail in mRNA biogenesis, stability and translation. During infection with potyvirus TuMV, acts as a potential integral component of the viral replicase complex that could play an important role in the regulation of potyviral RNA-dependent RNA polymerase (RdRp). The protein is Polyadenylate-binding protein 4 (PAB4) of Arabidopsis thaliana (Mouse-ear cress).